The sequence spans 969 residues: RNA polymerase-associated protein RapA (969 aa).

Positions 162 to 339 (EVGQRVAPRV…FARLALLDAD (178 aa)) constitute a Helicase ATP-binding domain. 175-182 (DEVGLGKT) serves as a coordination point for ATP. The short motif at 285–288 (DEAH) is the DEAH box element. One can recognise a Helicase C-terminal domain in the interval 492 to 663 (RIEWLITFLK…GFLKNPQAVG (172 aa)).

The protein belongs to the SNF2/RAD54 helicase family. RapA subfamily. As to quaternary structure, interacts with the RNAP. Has a higher affinity for the core RNAP than for the holoenzyme. Its ATPase activity is stimulated by binding to RNAP.

Its function is as follows. Transcription regulator that activates transcription by stimulating RNA polymerase (RNAP) recycling in case of stress conditions such as supercoiled DNA or high salt concentrations. Probably acts by releasing the RNAP, when it is trapped or immobilized on tightly supercoiled DNA. Does not activate transcription on linear DNA. Probably not involved in DNA repair. This chain is RNA polymerase-associated protein RapA, found in Actinobacillus pleuropneumoniae serotype 5b (strain L20).